We begin with the raw amino-acid sequence, 257 residues long: Achaete-scute complex protein T3 (257 aa).

Residues 83 to 145 enclose the bHLH domain; that stretch reads PSVARRNARE…RIAVEYIRGL (63 aa). The segment at 161–221 is disordered; it reads YNSADESSND…SEISGGGYIK (61 aa). Low complexity-rich tracts occupy residues 165 to 184 and 193 to 213; these read DESS…LDSS and QSAQ…SGSE.

In terms of assembly, efficient DNA binding requires dimerization with another bHLH protein. L(1)SC, SC and AC strongly label the presumptive stomatogastric nervous system, while ASE is more prominent in the presumptive procephalic lobe.

AS-C proteins are involved in the determination of the neuronal precursors in the peripheral nervous system and the central nervous system. This Drosophila melanogaster (Fruit fly) protein is Achaete-scute complex protein T3 (l(1)sc).